The chain runs to 280 residues: H-2 class II histocompatibility antigen gamma chain (280 aa).

Over M1–R30 the chain is Cytoplasmic. S9 bears the Phosphoserine mark. A helical; Signal-anchor for type II membrane protein membrane pass occupies residues G31 to Y56. Topologically, residues Q57–L280 are extracellular. N114 and N120 each carry an N-linked (GlcNAc...) asparagine glycan. In terms of domain architecture, Thyroglobulin type-1 spans L194 to C255. Cystine bridges form between C197/C216, C227/C234, and C236/C255. Residues H246–L268 form a disordered region. S266 carries an O-linked (Xyl...) (chondroitin sulfate) serine glycan.

Nonamer composed of three alpha/beta/gamma heterotrimers. Interacts with CD44; this complex is essential for the MIF-induced signaling cascade that results in B cell survival. As to quaternary structure, interacts with the mature form of CTSL; the complex survive in neutral pH environment.

It localises to the late endosome. It is found in the lysosome. The protein resides in the cell membrane. Its subcellular location is the endoplasmic reticulum membrane. The protein localises to the golgi apparatus. It localises to the trans-Golgi network. It is found in the endosome. The protein resides in the secreted. Plays a critical role in MHC class II antigen processing by stabilizing peptide-free class II alpha/beta heterodimers in a complex soon after their synthesis and directing transport of the complex from the endoplasmic reticulum to compartments where peptide loading of class II takes place. Enhance also the stimulation of T-cell responses through interaction with CD44. Its function is as follows. Binds to the peptide-binding site of MHC class II alpha/beta heterodimers forming an alpha-beta-CLIP complex, thereby preventing the loading of antigenic peptides to the MHC class II complex until its release by HLA-DM in the endosome. In terms of biological role, stabilizes the conformation of mature CTSL by binding to its active site and serving as a chaperone to help maintain a pool of mature enzyme in endocytic compartments and extracellular space of antigen-presenting cells (APCs). The sequence is that of H-2 class II histocompatibility antigen gamma chain from Rattus norvegicus (Rat).